A 104-amino-acid polypeptide reads, in one-letter code: ATP-dependent Clp protease adapter protein ClpS (104 aa).

The segment at 1–20 (MAEETPTRSPGGAAVLDKAP) is disordered.

It belongs to the ClpS family. In terms of assembly, binds to the N-terminal domain of the chaperone ClpA.

Functionally, involved in the modulation of the specificity of the ClpAP-mediated ATP-dependent protein degradation. In Synechococcus sp. (strain CC9902), this protein is ATP-dependent Clp protease adapter protein ClpS.